A 260-amino-acid polypeptide reads, in one-letter code: GDSL esterase/lipase WDL1 (260 aa).

Positions 1–35 are cleaved as a signal peptide; sequence MLGFAPAPGRPLFVLFGSSIVQFSFSNGGWGAALA. Residue Ser-18 is the Nucleophile of the active site. N-linked (GlcNAc...) asparagine glycans are attached at residues Asn-83 and Asn-150. Active-site residues include Asp-191 and His-194.

It belongs to the 'GDSL' lipolytic enzyme family. In terms of tissue distribution, highly expressed in panicles. Expressed in shoots, mature flowers and seeds.

Its subcellular location is the endoplasmic reticulum. In terms of biological role, involved in the organization of leaf cuticle and wax crystals. In Oryza sativa subsp. japonica (Rice), this protein is GDSL esterase/lipase WDL1.